The chain runs to 752 residues: Peptidyl-prolyl cis-trans isomerase G (752 aa).

Positions 11 to 176 (FFDIAINNQP…AEVRILSCGE (166 aa)) constitute a PPIase cyclophilin-type domain. Over residues 182–193 (KVKKEEKKRHKS) the composition is skewed to basic residues. Residues 182–752 (KVKKEEKKRH…SPGTDEDKSG (571 aa)) are disordered. The span at 194–214 (SSSSSSSDSDSSSDSQSSSES) shows a compositional bias: low complexity. Basic residues predominate over residues 226–251 (RKRKKKHRKNSRKHKKEKKKRKKSKK). Residues Ser-252, Ser-254, Ser-255, Ser-257, and Ser-288 each carry the phosphoserine modification. A compositionally biased stretch (basic and acidic residues) spans 290 to 308 (PKADDKERKNREREREREC). Phosphoserine is present on Ser-313. Residues 327–345 (SGRKIKGRGPRRYRTPSRS) show a composition bias toward basic residues. Basic and acidic residues-rich tracts occupy residues 346-366 (RSRD…EMQR) and 377-447 (RWIK…DKYN). Ser-354 bears the Phosphoserine mark. Position 356 is a phosphothreonine (Thr-356). Position 384 is a phosphoserine (Ser-384). A Glycyl lysine isopeptide (Lys-Gly) (interchain with G-Cter in SUMO2) cross-link involves residue Lys-390. Phosphoserine is present on residues Ser-395, Ser-411, and Ser-413. The span at 448–461 (KNKVKKRGKSKSRS) shows a compositional bias: basic residues. Composition is skewed to basic and acidic residues over residues 462 to 552 (KSKE…DLTK) and 577 to 598 (RSHD…QEYR). The span at 599-625 (RRGRSRSRDRRTPGRSRSKDRRRRRRD) shows a compositional bias: basic residues. The segment covering 626–684 (SRSSEREESQSRNKDKYRSQESKSSHRKENSEGEKRTYSKSRDHNSSSNNREKKADREQ) has biased composition (basic and acidic residues). Residues Ser-685 and Ser-688 each carry the phosphoserine modification. Residues 685–705 (SPVSKTKQSSQDNEVKSSTLK) are compositionally biased toward polar residues. Lys-691 is covalently cross-linked (Glycyl lysine isopeptide (Lys-Gly) (interchain with G-Cter in SUMO2)). A phosphoserine mark is found at Ser-694, Ser-742, and Ser-743. The span at 706–752 (NQEDEKTRSPVEKENQKSKGQENDHVHDKNKKCDHESSPGTDEDKSG) shows a compositional bias: basic and acidic residues. Thr-746 is modified (phosphothreonine). At Ser-751 the chain carries Phosphoserine.

In terms of assembly, interacts with CLK1, PNN and with the phosphorylated C-terminal domain of RNA polymerase II.

The protein localises to the nucleus matrix. The protein resides in the nucleus speckle. The catalysed reaction is [protein]-peptidylproline (omega=180) = [protein]-peptidylproline (omega=0). Its activity is regulated as follows. Inhibited by cyclosporin A (CsA). Its function is as follows. PPIase that catalyzes the cis-trans isomerization of proline imidic peptide bonds in oligopeptides and may therefore assist protein folding. May be implicated in the folding, transport, and assembly of proteins. May play an important role in the regulation of pre-mRNA splicing. In Mus musculus (Mouse), this protein is Peptidyl-prolyl cis-trans isomerase G (Ppig).